The chain runs to 39 residues: Cytochrome b559 subunit beta (39 aa).

The helical transmembrane segment at 14–30 (WLAIHGLAVPTVFFLGS) threads the bilayer. H18 is a binding site for heme.

The protein belongs to the PsbE/PsbF family. Heterodimer of an alpha subunit and a beta subunit. PSII is composed of 1 copy each of membrane proteins PsbA, PsbB, PsbC, PsbD, PsbE, PsbF, PsbH, PsbI, PsbJ, PsbK, PsbL, PsbM, PsbT, PsbX, PsbY, PsbZ, Psb30/Ycf12, at least 3 peripheral proteins of the oxygen-evolving complex and a large number of cofactors. It forms dimeric complexes. It depends on heme b as a cofactor.

It localises to the plastid. Its subcellular location is the chloroplast thylakoid membrane. Functionally, this b-type cytochrome is tightly associated with the reaction center of photosystem II (PSII). PSII is a light-driven water:plastoquinone oxidoreductase that uses light energy to abstract electrons from H(2)O, generating O(2) and a proton gradient subsequently used for ATP formation. It consists of a core antenna complex that captures photons, and an electron transfer chain that converts photonic excitation into a charge separation. In Psilotum nudum (Whisk fern), this protein is Cytochrome b559 subunit beta.